Here is a 910-residue protein sequence, read N- to C-terminus: p53-induced death domain-containing protein 1 (910 aa).

The segment at 1 to 25 is disordered; that stretch reads MAATVEGPELEAAAAAGDASEDSDA. N-acetylalanine is present on A2. LRR repeat units follow at residues 126-147, 149-171, 172-194, 195-216, 218-240, 241-263, and 264-285; these read HLAH…VLQM, GLGA…GALP, ALTF…GALS, TLQR…IGGL, SLLE…AGLR, SLRL…ARLP, and LLTR…LLDA. Phosphoserine is present on residues S299 and S305. ZU5 domains lie at 322-454 and 455-596; these read DLDS…VSRP and VSNA…WYTT. 2 peptidase S68 regions span residues 423–452 and 566–594; these read DLET…LVVS and DITA…WLWY. Catalysis depends on residues H444, S446, H586, and S588. A UPA domain region spans residues 580–716; that stretch reads ARFQVTHFSW…TTTLDREAQA (137 aa). The Death domain occupies 788–873; that stretch reads TQSNLLSVAG…DVAEEVRAVL (86 aa). Positions 884-910 are disordered; that stretch reads IRRMGLAPKDPALPGSSAPQPPEPAQA.

As to quaternary structure, forms a complex named the PIDDosome with CASP2 and CRADD. Forms a complex with IKBKG and RIPK1. Interacts with FADD and MADD. Undergoes autoproteolytic processing whose extent either directs cells towards survival or apoptotic pathways. Autoproteolytically cleaved into two main fragments PIDD-N and PIDD-C. PIDD-C can be further processed into PIDD-CC, a processing which is enhanced by DNA damage. The cleavage producing PIDD-C is required for translocation of PIDD1 to the nucleus upon DNA damage and activation of NF-kappa-B. PIDD-CC mediates the interaction with CRADD and the cleavage producing PIDD-CC is required for the activation of CASP2. PIDD-N remains associated with PIDD-C and PIDD-CC after cleavage. Ubiquitous.

The protein localises to the cytoplasm. It localises to the nucleus. Component of the DNA damage/stress response pathway that functions downstream of p53/TP53 and can either promote cell survival or apoptosis. Associated with CRADD and the CASP2 caspase, it forms the PIDDosome a complex that activates CASP2 and triggers apoptosis. Associated with IKBKG and RIPK1, it enhances sumoylation and ubiquitination of IKBKG which is important for activation of the transcription factor NF-kappa-B. This chain is p53-induced death domain-containing protein 1, found in Homo sapiens (Human).